The chain runs to 111 residues: uncharacterized protein (111 aa).

It localises to the mitochondrion. This is an uncharacterized protein from Arabidopsis thaliana (Mouse-ear cress).